Reading from the N-terminus, the 529-residue chain is Ell-associated factor Eaf (529 aa).

2 disordered regions span residues 155–235 and 253–529; these read AAGS…PMIT and ANIS…DDDD. A compositionally biased stretch (polar residues) spans 167–186; the sequence is ENSTMRISSKTKVSTGSRRN. Composition is skewed to low complexity over residues 194-215, 256-265, 306-315, and 327-346; these read RNSPMQQSSPSRPVVSHRSPQS, SGSSTGSSSG, HQNQQQQQQN, and QQQHQQQMQQQQQQHQQQQQ. Position 196 is a phosphoserine (Ser196). The span at 347-359 shows a compositional bias: polar residues; that stretch reads RASFSHSNHSNSM. The segment covering 401-416 has biased composition (acidic residues); it reads DSSDTDSGSDSDDSTD. Low complexity-rich tracts occupy residues 431–451, 469–480, 488–499, and 510–523; these read HQQQHHQMQQQHQQQQQHMHQ, QHQQQQQQPPQQ, QQQQQQQQQQQS, and NDLLQNDLQLSSNS.

This sequence belongs to the EAF family.

It localises to the nucleus. Functionally, promotes transcriptional elongation by Su(Tpl)/ELL. Essential for development. The protein is Ell-associated factor Eaf of Drosophila grimshawi (Hawaiian fruit fly).